The primary structure comprises 363 residues: MSSDAARTPLLPTEKIDTMAQDFNLNSRTSSSRKRRLRRSRSAPRGDCMYNDDVKIDEPPPHPSKIPMFSDLNPNLRRVIMFLALYLTIGTLCFYLVRDQISGHKTSGVVDALYFCIVTMTTVGYGDLVPNSSASRLLACAFVFSGMVLVGHLLSRAADYLVEKQEALLVRAFHLRQSFGPTDILKELHTNKLRYKCYATCLVLVVLFIVGTIFLVMVEKMPVISAFYCVCSTVTTLGYGDKSFNSEAGRLFAVFWILTSSICLAQFFLYVAELNTENKQRALVKWVLTRRITNNDLEAADLDEDGVVGAAEFIVYKLKEMGKIDEKDISGIMDEFEQLDYDESGTLTTSDIVLAQTTSQIQR.

Residues 1 to 61 (MSSDAARTPL…DDVKIDEPPP (61 aa)) are disordered. At 1 to 78 (MSSDAARTPL…FSDLNPNLRR (78 aa)) the chain is on the cytoplasmic side. Positions 31–42 (SSRKRRLRRSRS) are enriched in basic residues. The helical transmembrane segment at 79–99 (VIMFLALYLTIGTLCFYLVRD) threads the bilayer. The pore-forming intramembrane region spans 111–130 (DALYFCIVTMTTVGYGDLVP). A helical transmembrane segment spans residues 137 to 157 (LLACAFVFSGMVLVGHLLSRA). At 158–197 (ADYLVEKQEALLVRAFHLRQSFGPTDILKELHTNKLRYKC) the chain is on the cytoplasmic side. A helical membrane pass occupies residues 198-218 (YATCLVLVVLFIVGTIFLVMV). Residues 225–244 (SAFYCVCSTVTTLGYGDKSF) constitute an intramembrane region (pore-forming). The chain crosses the membrane as a helical span at residues 251–271 (LFAVFWILTSSICLAQFFLYV). Over 272–363 (AELNTENKQR…LAQTTSQIQR (92 aa)) the chain is Cytoplasmic. 2 EF-hand domains span residues 288 to 323 (LTRR…EMGK) and 327 to 362 (KDIS…SQIQ). The Endoplasmic reticulum release signal motif lies at 296 to 298 (DLE). The Ca(2+) site is built by Asp-301, Asp-303, Asp-305, Glu-312, Asp-340, Asp-342, Ser-344, Thr-346, and Asp-351.

The protein belongs to the two pore domain potassium channel (TC 1.A.1.7) family. Homodimer. Interacts with GRF1 and GRF6, but only GRF6 modulates the channel activity. Phosphorylation at Ser-42 increases and stabilizes the interaction with 14-3-3 proteins. In terms of tissue distribution, detected in mesophyll cells, guard cells and vascular tissues of the leaves. Expressed in the hilum, where the funiculus is attached during fruit maturation and in the embryo. Also expressed at a lower level in seedlings, root tips and elongation zones, and flowers. Could be detected in mitotically active tissues.

Its subcellular location is the vacuole membrane. Could be activated by protein kinase C. Strongly induced by calcium. Blocked by barium, tetraethylammonium (TEA), quinine and quinidine. Its function is as follows. Voltage-independent, large conductance and potassium-selective tonoplast ion channel. Regulated by cytoplasmic calcium and pH. Does not mediate slow-vacuolar (SV) ionic currents, but essential to establish VK currents. Has some permeability for Rb(+) and NH(4)(+), but none for Na(+), Cs(+) or Li(+). Involved in intracellular K(+) redistribution and/or K(+) retranslocation between different tissues. This chain is Two-pore potassium channel 1 (TPK1), found in Arabidopsis thaliana (Mouse-ear cress).